The chain runs to 116 residues: Endoribonuclease toxin ChpB (116 aa).

The protein belongs to the PemK/MazF family. As to quaternary structure, homodimer, interacts with ChpS, which inhibits the endoribonuclease activity.

With respect to regulation, stimulated in vitro in a concentration-dependent fashion by extracellular death factor (EDF, a quorum sensing pentapeptide sequence NNWNN, probably produced from the zwf gene product glucose-6-phosphate 1-dehydrogenase), which is able to overcome inhibition by cognate antitoxin ChpS. In terms of biological role, toxic component of a type II toxin-antitoxin (TA) system. ChpB is a sequence-specific mRNA and (weak) tmRNA endoribonuclease that inhibits protein synthesis and induces bacterial stasis. Cleavage is independent of the ribosome. Cleavage occurs at ACY sequences where Y is not C. The endoribonuclease activity is not as strong as that of MazF. The endoribonuclease activity (a toxin) is inhibited by its labile cognate antitoxin ChpS. Toxicity results when the levels of ChpS decrease in the cell, leading to mRNA degradation. Both ChpS and ChpB probably bind to the promoter region of the chpS-chpB operon to autoregulate their synthesis. In Escherichia coli (strain K12), this protein is Endoribonuclease toxin ChpB (chpB).